The following is a 203-amino-acid chain: Glycerol-3-phosphate acyltransferase (203 aa).

A run of 5 helical transmembrane segments spans residues 5 to 25 (VLGLVLVAAGYLAGSIPFGVV), 55 to 75 (KLGIAVLLLDAAKAIVPILVA), 88 to 108 (FTVLVALAAFVGHLYPVWLGF), 114 to 134 (VATGLGIFLVLSPWAALAGAV), and 162 to 182 (FVAHGWTSPVSWAGLALAALI).

It belongs to the PlsY family. In terms of assembly, probably interacts with PlsX.

Its subcellular location is the cell inner membrane. The enzyme catalyses an acyl phosphate + sn-glycerol 3-phosphate = a 1-acyl-sn-glycero-3-phosphate + phosphate. Its pathway is lipid metabolism; phospholipid metabolism. In terms of biological role, catalyzes the transfer of an acyl group from acyl-phosphate (acyl-PO(4)) to glycerol-3-phosphate (G3P) to form lysophosphatidic acid (LPA). This enzyme utilizes acyl-phosphate as fatty acyl donor, but not acyl-CoA or acyl-ACP. The polypeptide is Glycerol-3-phosphate acyltransferase (Anaeromyxobacter sp. (strain Fw109-5)).